We begin with the raw amino-acid sequence, 837 residues long: Periplasmic nitrate reductase (837 aa).

A signal peptide (tat-type signal) is located at residues 1–32 (MTSPKLDRRQMLKLEAAAIAAAAAGLPVPALA). One can recognise a 4Fe-4S Mo/W bis-MGD-type domain in the interval 44 to 100 (LKWDKAACRFCGTGCSVMVATKENRVVATHGDIKAEVNRGLNCVKGYFLSKIMYGHD). [4Fe-4S] cluster-binding residues include cysteine 51, cysteine 54, cysteine 58, and cysteine 86. Residues lysine 88, glutamine 155, asparagine 180, cysteine 184, 217–224 (WGSNMAEM), 248–252 (STFEH), 267–269 (QTD), methionine 378, glutamine 382, asparagine 488, 514–515 (SD), lysine 537, aspartate 564, and 724–733 (TGRVLEHWHS) contribute to the Mo-bis(molybdopterin guanine dinucleotide) site. Tryptophan 800 contributes to the substrate binding site. Residues asparagine 808 and lysine 825 each contribute to the Mo-bis(molybdopterin guanine dinucleotide) site.

This sequence belongs to the prokaryotic molybdopterin-containing oxidoreductase family. NasA/NapA/NarB subfamily. In terms of assembly, component of the periplasmic nitrate reductase NapAB complex composed of NapA and NapB. [4Fe-4S] cluster serves as cofactor. It depends on Mo-bis(molybdopterin guanine dinucleotide) as a cofactor. Post-translationally, predicted to be exported by the Tat system. The position of the signal peptide cleavage has not been experimentally proven.

The protein localises to the periplasm. The catalysed reaction is 2 Fe(II)-[cytochrome] + nitrate + 2 H(+) = 2 Fe(III)-[cytochrome] + nitrite + H2O. Functionally, catalytic subunit of the periplasmic nitrate reductase complex NapAB. Receives electrons from NapB and catalyzes the reduction of nitrate to nitrite. This Bradyrhizobium diazoefficiens (strain JCM 10833 / BCRC 13528 / IAM 13628 / NBRC 14792 / USDA 110) protein is Periplasmic nitrate reductase.